The following is a 77-amino-acid chain: U8-lycotoxin-Ls1p (77 aa).

The first 20 residues, 1 to 20 (MKLMIFTGLVLFAIVSLIEA), serve as a signal peptide directing secretion. A propeptide spanning residues 21 to 26 (QAENEK) is cleaved from the precursor.

It belongs to the neurotoxin 19 (CSTX) family. 08 (U8-Lctx) subfamily. Post-translationally, contains 4 disulfide bonds. Expressed by the venom gland.

It localises to the secreted. The sequence is that of U8-lycotoxin-Ls1p from Lycosa singoriensis (Wolf spider).